The chain runs to 251 residues: 1-(5-phosphoribosyl)-5-[(5-phosphoribosylamino)methylideneamino] imidazole-4-carboxamide isomerase (251 aa).

The Proton acceptor role is filled by Asp-8. The Proton donor role is filled by Asp-131.

The protein belongs to the HisA/HisF family.

It is found in the cytoplasm. The enzyme catalyses 1-(5-phospho-beta-D-ribosyl)-5-[(5-phospho-beta-D-ribosylamino)methylideneamino]imidazole-4-carboxamide = 5-[(5-phospho-1-deoxy-D-ribulos-1-ylimino)methylamino]-1-(5-phospho-beta-D-ribosyl)imidazole-4-carboxamide. It functions in the pathway amino-acid biosynthesis; L-histidine biosynthesis; L-histidine from 5-phospho-alpha-D-ribose 1-diphosphate: step 4/9. This Burkholderia pseudomallei (strain 1710b) protein is 1-(5-phosphoribosyl)-5-[(5-phosphoribosylamino)methylideneamino] imidazole-4-carboxamide isomerase.